A 358-amino-acid chain; its full sequence is Nicotinate-nucleotide--dimethylbenzimidazole phosphoribosyltransferase (358 aa).

E323 functions as the Proton acceptor in the catalytic mechanism.

The protein belongs to the CobT family.

It carries out the reaction 5,6-dimethylbenzimidazole + nicotinate beta-D-ribonucleotide = alpha-ribazole 5'-phosphate + nicotinate + H(+). The protein operates within nucleoside biosynthesis; alpha-ribazole biosynthesis; alpha-ribazole from 5,6-dimethylbenzimidazole: step 1/2. Its function is as follows. Catalyzes the synthesis of alpha-ribazole-5'-phosphate from nicotinate mononucleotide (NAMN) and 5,6-dimethylbenzimidazole (DMB). This is Nicotinate-nucleotide--dimethylbenzimidazole phosphoribosyltransferase from Oleidesulfovibrio alaskensis (strain ATCC BAA-1058 / DSM 17464 / G20) (Desulfovibrio alaskensis).